A 273-amino-acid polypeptide reads, in one-letter code: Ribonuclease Z (273 aa).

The Zn(2+) site is built by histidine 61, histidine 63, histidine 146, aspartate 169, and histidine 233.

It belongs to the RNase Z family. As to quaternary structure, homodimer. Zn(2+) is required as a cofactor.

It catalyses the reaction Endonucleolytic cleavage of RNA, removing extra 3' nucleotides from tRNA precursor, generating 3' termini of tRNAs. A 3'-hydroxy group is left at the tRNA terminus and a 5'-phosphoryl group is left at the trailer molecule.. Zinc phosphodiesterase, which displays some tRNA 3'-processing endonuclease activity. Probably involved in tRNA maturation, by removing a 3'-trailer from precursor tRNA. This is Ribonuclease Z from Mycobacterium tuberculosis (strain ATCC 25177 / H37Ra).